Reading from the N-terminus, the 671-residue chain is DNA ligase (671 aa).

NAD(+)-binding positions include 32 to 36 (DAEYD), 81 to 82 (SL), and Glu-113. The active-site N6-AMP-lysine intermediate is Lys-115. NAD(+) is bound by residues Arg-136, Glu-173, Lys-290, and Lys-314. Positions 408, 411, 426, and 432 each coordinate Zn(2+). The BRCT domain occupies 593–671 (EIDSPFAGKT…ETEMLRLLGS (79 aa)).

The protein belongs to the NAD-dependent DNA ligase family. LigA subfamily. Mg(2+) is required as a cofactor. Mn(2+) serves as cofactor.

The enzyme catalyses NAD(+) + (deoxyribonucleotide)n-3'-hydroxyl + 5'-phospho-(deoxyribonucleotide)m = (deoxyribonucleotide)n+m + AMP + beta-nicotinamide D-nucleotide.. In terms of biological role, DNA ligase that catalyzes the formation of phosphodiester linkages between 5'-phosphoryl and 3'-hydroxyl groups in double-stranded DNA using NAD as a coenzyme and as the energy source for the reaction. It is essential for DNA replication and repair of damaged DNA. The polypeptide is DNA ligase (Escherichia fergusonii (strain ATCC 35469 / DSM 13698 / CCUG 18766 / IAM 14443 / JCM 21226 / LMG 7866 / NBRC 102419 / NCTC 12128 / CDC 0568-73)).